Here is a 593-residue protein sequence, read N- to C-terminus: Translocon at the outer membrane of chloroplasts 64 (593 aa).

Over M1–M4 the chain is Chloroplast intermembrane. The helical transmembrane segment at A5 to L25 threads the bilayer. Residues T26–G144 are Cytoplasmic-facing. A helical membrane pass occupies residues G145–V165. Topologically, residues D166 to L403 are chloroplast intermembrane. The helical transmembrane segment at S404–F424 threads the bilayer. At D425–Q593 the chain is on the cytoplasmic side. 3 TPR repeats span residues A477 to N510, A511 to N544, and V545 to N578.

Part of the Toc complex and of the intermembrane space complex. Interacts with TOC12, TIC22 and with the cytosolic domain of TOC34 in a GTP dependent manner. Interacts (via TPR region) with HSP90 and with HSP70 with low efficiency.

The protein resides in the plastid. It localises to the chloroplast outer membrane. Chaperone receptor mediating Hsp90-dependent protein targeting to chloroplasts. Bi-functional preprotein receptor acting on both sides of the membrane. In Pisum sativum (Garden pea), this protein is Translocon at the outer membrane of chloroplasts 64 (TOC64).